The primary structure comprises 149 residues: Putative pre-16S rRNA nuclease (149 aa).

This sequence belongs to the YqgF nuclease family.

Its subcellular location is the cytoplasm. In terms of biological role, could be a nuclease involved in processing of the 5'-end of pre-16S rRNA. The polypeptide is Putative pre-16S rRNA nuclease (Burkholderia multivorans (strain ATCC 17616 / 249)).